Consider the following 589-residue polypeptide: Arginine--tRNA ligase (589 aa).

The 'HIGH' region signature appears at A123–H133.

This sequence belongs to the class-I aminoacyl-tRNA synthetase family. In terms of assembly, monomer.

The protein localises to the cytoplasm. It catalyses the reaction tRNA(Arg) + L-arginine + ATP = L-arginyl-tRNA(Arg) + AMP + diphosphate. The polypeptide is Arginine--tRNA ligase (Hyphomonas neptunium (strain ATCC 15444)).